A 568-amino-acid chain; its full sequence is MKKPIITFNNFSFQYHSQSEPTLKGIQLTIYEGEKVLIVGPSGSGKSTLAQCINGLIPNIYEGEIQGTATVAGKNIQETSLFDLSFDVGTVLQDTDGQFIGLTVAEDIAFALENDAVEQAEMKKAVQKWSEIVELNQLLQHRPQDLSGGQKQRVSMAGVLINQSKILLFDEPLANLDPRAGQETMTLIDTIQQETKATVLIIEHRLEDVLCESVDRIIVMNEGTIISDTTPDELLRQDTLTQQGIREPLYVTAMKYAGIDLTQVSHLDKLAEVSGETVLPKMTQWSVQPSSVSAVKGAELLRLEQVSYQYDRHGEKVLDDFSVTIHHGEMISIVGKNGAGKSTLSKIICGFITPQSGKILWEGQDFSNYSIKERADKIGYVMQNPNQMISKKMIFEEVALGLVLRDVPQAEIEERVTNILHICGLYPFRNWPISALSFGQKKRVTIASILVLEPELLILDEPTAGQDFKHYTEMMTFLEELNRLGVTILMITHDMHLMLEYTTRALVVCDGRLLADATPVAVLTDEKLIQAASLKETSLFTFAKALGLENPLLFTEKFVAYDREVRFG.

ABC transporter domains lie at 6–247 and 301–535; these read ITFN…GIRE and LRLE…ASLK. ATP-binding positions include 40–47 and 335–342; these read GPSGSGKS and GKNGAGKS.

It belongs to the ABC transporter superfamily.

Its subcellular location is the cell membrane. Its function is as follows. Probably part of an ABC transporter complex. Responsible for energy coupling to the transport system. The protein is Putative ABC transporter ATP-binding protein EF_2153 of Enterococcus faecalis (strain ATCC 700802 / V583).